The following is a 521-amino-acid chain: MREIVTLQFGERSNYLGTHFWNTQESYFTYPPEAESPVNHDILFRPGIAPDGSDTFTPRALIYDLKGAFGSMRKINALYEPEDDRSILDQPGVWPSKPIVQRTQPIPPSTYQEHLDNGLDPPALNISSVRYWSDYSRVFYHPKSIAQLSEFDVNDTLMPFEKWEVGKGLFEKLEREVDLVDRDLRPFVEECDGIQGLQIFTGVDDAWGGWASGWIERLRDEYGKMSIWTWGLGDQGANAAVGRERRLQQMVNASQSLQTLGEQSSVYIPISNSPTKTPSYLSLDATSLWHVGALQAIGLESMTISSRLRTSVGGRGNLQDLEDTINSTGKRRIGKFEMSIADPEVLSENYSKEMAQAEKTGSMTSRRTSEDDEELSSFDIDVFTRDYRAVSRSGKKEHVFGRAEVSRGDWNLTDDNEARDPHNRFNQGPTLQRYTAPILFPLLDSYPTSIFDVGSGLGTKLAVHAGLTTSTAVAGQIRAVEQIVKRLVGIEEREALCNGLQVLAEEYDEGWDSGTDSDDDG.

Belongs to the misato family.

It is found in the mitochondrion. Its function is as follows. Involved in the partitioning of the mitochondrial organelle and mitochondrial DNA (mtDNA) inheritance. This chain is Protein DML1 (DML1), found in Phaeosphaeria nodorum (strain SN15 / ATCC MYA-4574 / FGSC 10173) (Glume blotch fungus).